The sequence spans 235 residues: Calcium-activated potassium channel subunit beta-2 (235 aa).

The ball and chain stretch occupies residues 1–45; that stretch reads MFIWTSGRTSSSYRHDEKRNIYQKIRDHDLLDKRKTVTALKAGED. The Cytoplasmic portion of the chain corresponds to 1-46; sequence MFIWTSGRTSSSYRHDEKRNIYQKIRDHDLLDKRKTVTALKAGEDR. Residues 47 to 67 traverse the membrane as a helical segment; the sequence is AILLGLAMMVCSIMMYFLLGI. The Extracellular segment spans residues 68–194; it reads TLLRSYMQSV…VILTKLYSSN (127 aa). N-linked (GlcNAc...) asparagine glycosylation is found at N88, N96, and N119. Residues 195 to 215 form a helical membrane-spanning segment; it reads VLFHSLFWPTCMMAGGVAIVA. At 216 to 235 the chain is on the cytoplasmic side; that stretch reads MVKLTQYLSLLCERIQRINR.

It belongs to the KCNMB (TC 8.A.14.1) family. KCNMB2 subfamily. As to quaternary structure, interacts with KCNMA1 tetramer. There are probably 4 molecules of KCMNB2 per KCNMA1 tetramer. N-glycosylated. Highly expressed in brain and heart. Also expressed in lung.

The protein localises to the membrane. Regulatory subunit of the calcium activated potassium KCNMA1 (maxiK) channel. Modulates the calcium sensitivity and gating kinetics of KCNMA1, thereby contributing to KCNMA1 channel diversity. Acts as a negative regulator that confers rapid and complete inactivation of KCNMA1 channel complex. The protein is Calcium-activated potassium channel subunit beta-2 (Kcnmb2) of Rattus norvegicus (Rat).